The primary structure comprises 397 residues: Phosphoglycerate kinase (397 aa).

Substrate contacts are provided by residues 21–23 (DFN), arginine 37, 60–63 (HLGR), arginine 119, and arginine 152. ATP contacts are provided by residues lysine 203, glycine 294, glutamate 325, and 354-357 (GGDS).

This sequence belongs to the phosphoglycerate kinase family. In terms of assembly, monomer.

It localises to the cytoplasm. The catalysed reaction is (2R)-3-phosphoglycerate + ATP = (2R)-3-phospho-glyceroyl phosphate + ADP. The protein operates within carbohydrate degradation; glycolysis; pyruvate from D-glyceraldehyde 3-phosphate: step 2/5. The chain is Phosphoglycerate kinase from Chlorobaculum tepidum (strain ATCC 49652 / DSM 12025 / NBRC 103806 / TLS) (Chlorobium tepidum).